A 328-amino-acid polypeptide reads, in one-letter code: MGSNSTSSAESNCNATYLPFQYSLYATTYIFIFIPGLLANSAALWVLCRFISKKNKAIIFMINLSVADLAHILSLPLRIYYYINRHWPFQRALCLLCFYLKYLNMYASIFFLTCISLQRCLFLLKPFRARNWKRRYDVGISAVIWIVVGTACLPFPILRNAGLANSTDSCFADLGYKQMDAVVLVTMVVIAELAGFVIPVITIACCTWKTTVSLKHPPIAFQGISERKKALRMVFMCAAVFVICFTPYHINFIFYTMVKESIITSCPTVKSTLYFHPFSLCLASLCCLLDPILYYFMASEFRDQLSRHGSSVTRSRLMSRESGSSMVN.

At 1 to 27 the chain is on the extracellular side; the sequence is MGSNSTSSAESNCNATYLPFQYSLYAT. N-linked (GlcNAc...) asparagine glycosylation is found at Asn4 and Asn14. A helical transmembrane segment spans residues 28 to 48; that stretch reads TYIFIFIPGLLANSAALWVLC. The Cytoplasmic segment spans residues 49–56; it reads RFISKKNK. The helical transmembrane segment at 57–77 threads the bilayer; sequence AIIFMINLSVADLAHILSLPL. Residues 78–91 lie on the Extracellular side of the membrane; that stretch reads RIYYYINRHWPFQR. Residues 92–112 form a helical membrane-spanning segment; that stretch reads ALCLLCFYLKYLNMYASIFFL. A disulfide bridge connects residues Cys94 and Cys170. The Cytoplasmic segment spans residues 113–137; it reads TCISLQRCLFLLKPFRARNWKRRYD. Residues 138–158 form a helical membrane-spanning segment; sequence VGISAVIWIVVGTACLPFPIL. The Extracellular portion of the chain corresponds to 159–182; it reads RNAGLANSTDSCFADLGYKQMDAV. The chain crosses the membrane as a helical span at residues 183–203; sequence VLVTMVVIAELAGFVIPVITI. Residues 204-233 are Cytoplasmic-facing; sequence ACCTWKTTVSLKHPPIAFQGISERKKALRM. The helical transmembrane segment at 234–254 threads the bilayer; the sequence is VFMCAAVFVICFTPYHINFIF. The Extracellular portion of the chain corresponds to 255–277; the sequence is YTMVKESIITSCPTVKSTLYFHP. Residues 278-298 traverse the membrane as a helical segment; that stretch reads FSLCLASLCCLLDPILYYFMA. At 299-328 the chain is on the cytoplasmic side; sequence SEFRDQLSRHGSSVTRSRLMSRESGSSMVN.

The protein belongs to the G-protein coupled receptor 1 family.

The protein localises to the cell membrane. Its function is as follows. Putative receptor for purines coupled to G-proteins. This is Putative P2Y purinoceptor 10 (P2ry10) from Mus musculus (Mouse).